A 124-amino-acid chain; its full sequence is Histone H2B, embryonic (124 aa).

A disordered region spans residues 1–31 (MAPTAQVAKKGSKKAVKGTKTAXGGKKRNRK). S111 is a glycosylation site (O-linked (GlcNAc) serine). K119 is covalently cross-linked (Glycyl lysine isopeptide (Lys-Gly) (interchain with G-Cter in ubiquitin)).

It belongs to the histone H2B family. The nucleosome is a histone octamer containing two molecules each of H2A, H2B, H3 and H4 assembled in one H3-H4 heterotetramer and two H2A-H2B heterodimers. The octamer wraps approximately 147 bp of DNA. Monoubiquitination of Lys-119 gives a specific tag for epigenetic transcriptional activation and is also prerequisite for histone H3 'Lys-4' and 'Lys-79' methylation. Post-translationally, glcNAcylation at Ser-111 promotes monoubiquitination of Lys-119. It fluctuates in response to extracellular glucose, and associates with transcribed genes.

It localises to the nucleus. It is found in the chromosome. Its function is as follows. Core component of nucleosome. Nucleosomes wrap and compact DNA into chromatin, limiting DNA accessibility to the cellular machineries which require DNA as a template. Histones thereby play a central role in transcription regulation, DNA repair, DNA replication and chromosomal stability. DNA accessibility is regulated via a complex set of post-translational modifications of histones, also called histone code, and nucleosome remodeling. This Strongylocentrotus purpuratus (Purple sea urchin) protein is Histone H2B, embryonic.